We begin with the raw amino-acid sequence, 38 residues long: Trypsin inhibitor DE5 beta chain (38 aa).

Belongs to the protease inhibitor I3 (leguminous Kunitz-type inhibitor) family. In terms of assembly, heterodimer of an alpha and a beta chain linked by a disulfide bond.

In terms of biological role, inhibition of trypsin. The polypeptide is Trypsin inhibitor DE5 beta chain (Adenanthera pavonina (Sandal bead tree)).